A 230-amino-acid chain; its full sequence is Probable septum site-determining protein MinC (230 aa).

Belongs to the MinC family. As to quaternary structure, interacts with MinD and FtsZ.

Its function is as follows. Cell division inhibitor that blocks the formation of polar Z ring septums. Rapidly oscillates between the poles of the cell to destabilize FtsZ filaments that have formed before they mature into polar Z rings. Prevents FtsZ polymerization. In Cronobacter sakazakii (strain ATCC BAA-894) (Enterobacter sakazakii), this protein is Probable septum site-determining protein MinC.